The following is a 395-amino-acid chain: Dihydrolipoyllysine-residue succinyltransferase component of 2-oxoglutarate dehydrogenase complex (395 aa).

In terms of domain architecture, Lipoyl-binding spans 2–77; sequence RVKIIVPSLG…AVGEEIGEIN (76 aa). Lys43 bears the N6-lipoyllysine mark. A Peripheral subunit-binding (PSBD) domain is found at 111-148; sequence TLAPSVQKLVTENKLDPNNIKGTGRDGRITKGDVLATI. Catalysis depends on residues His366 and Asp370.

The protein belongs to the 2-oxoacid dehydrogenase family. As to quaternary structure, forms a 24-polypeptide structural core with octahedral symmetry. Part of the 2-oxoglutarate dehydrogenase (OGDH) complex composed of E1 (2-oxoglutarate dehydrogenase), E2 (dihydrolipoamide succinyltransferase) and E3 (dihydrolipoamide dehydrogenase); the complex contains multiple copies of the three enzymatic components (E1, E2 and E3). (R)-lipoate serves as cofactor.

The enzyme catalyses N(6)-[(R)-dihydrolipoyl]-L-lysyl-[protein] + succinyl-CoA = N(6)-[(R)-S(8)-succinyldihydrolipoyl]-L-lysyl-[protein] + CoA. The protein operates within amino-acid degradation; L-lysine degradation via saccharopine pathway; glutaryl-CoA from L-lysine: step 6/6. Functionally, E2 component of the 2-oxoglutarate dehydrogenase (OGDH) complex which catalyzes the second step in the conversion of 2-oxoglutarate to succinyl-CoA and CO(2). This chain is Dihydrolipoyllysine-residue succinyltransferase component of 2-oxoglutarate dehydrogenase complex (sucB), found in Rickettsia conorii (strain ATCC VR-613 / Malish 7).